The chain runs to 160 residues: MTQRLLRLSLAHYRKDSCTEESCHYFGTALHAKQAATLHAKHGTLQYYQVYSTQAARDALDAFRRSLGADWTIDQHDLTVELYIRDLQTLRNIAADPEFASFYHLEEPYLSRRHVVASLGWVEAYVEEGKVVNVTDEGSEYRPGFGEFVGSGGELEKALA.

The EthD domain maps to 24-100 (HYFGTALHAK…RNIAADPEFA (77 aa)).

The protein belongs to the tpcK family.

Putative oxygenase; part of the gene cluster that mediates the biosynthesis of isoflavipucine. The PKS part of the PKS-NRPS ATEG_00325 probably assembles a triketide from an acetyl starter and two malonyl-CoA extender units. The poly-beta-keto intermediate would then be fused to the leucine unit by the NRPS part. The resulting amide would be liberated from the PKS-NRPS through reductive release of the linear PKS-NRPS product from the enzyme complex. Further steps in isoflapucine synthesis include a cyclization step, an oxidation step, a hydrolysis step involving a trans-amidation, and an additional oxidation step, leading to flavipucine. Formation of isoflavipucine from flavipucine requires an unusual rearrangement. Alternative rearrangement reactions could build up rubrobramide, representing a branching of flavipucine biosynthesis. The enzymes involved in the post-PKS-NRPS steps have not been identified yet, but the putative oxygenases ATEG_003329 and ATEG_00330 encoded by the cluster could play a role. This is Putative oxygenase ATEG_00330 from Aspergillus terreus (strain NIH 2624 / FGSC A1156).